The following is a 287-amino-acid chain: Taxis protein CheF2 (287 aa).

Interacts with chemotaxis (Che) proteins as well as flagella accessory (Fla) proteins.

Functionally, involved in taxis signal transduction. This Halobacterium salinarum (strain ATCC 29341 / DSM 671 / R1) protein is Taxis protein CheF2 (cheF2).